The following is a 178-amino-acid chain: Nucleoside-triphosphatase THEP1 (178 aa).

Residues 7 to 14 (GEPGVGKT) and 102 to 109 (VIIIDEIG) each bind ATP.

This sequence belongs to the THEP1 NTPase family. In terms of assembly, monomer.

The enzyme catalyses a ribonucleoside 5'-triphosphate + H2O = a ribonucleoside 5'-diphosphate + phosphate + H(+). Its function is as follows. Has nucleotide phosphatase activity towards ATP, GTP, CTP, TTP and UTP. May hydrolyze nucleoside diphosphates with lower efficiency. Does not have kinase activity. This chain is Nucleoside-triphosphatase THEP1, found in Aquifex aeolicus (strain VF5).